The primary structure comprises 202 residues: Ribonuclease HII (202 aa).

Residues 18–202 (GQYAGVDEVG…KSFRPVREAM (185 aa)) enclose the RNase H type-2 domain. A divalent metal cation contacts are provided by aspartate 24, glutamate 25, and aspartate 116.

This sequence belongs to the RNase HII family. Requires Mn(2+) as cofactor. Mg(2+) serves as cofactor.

The protein localises to the cytoplasm. The catalysed reaction is Endonucleolytic cleavage to 5'-phosphomonoester.. Its function is as follows. Endonuclease that specifically degrades the RNA of RNA-DNA hybrids. In Shewanella piezotolerans (strain WP3 / JCM 13877), this protein is Ribonuclease HII.